Here is a 438-residue protein sequence, read N- to C-terminus: Putative formin-like protein 21a (438 aa).

The interval 1–74 (MSPVEISGAD…RVLPRPPPPP (74 aa)) is disordered. The segment covering 22–61 (PLPPPPPPPPPPMRRRAPLPPPPPPPMRRRAPLPPPPPPA) has biased composition (pro residues). The FH2 domain maps to 124–438 (FPCPSKKKSS…SYGYFDQPWI (315 aa)).

Belongs to the formin-like family. Class-II subfamily.

The protein is Putative formin-like protein 21a (FH21A) of Arabidopsis thaliana (Mouse-ear cress).